Reading from the N-terminus, the 263-residue chain is Protein YpjB (263 aa).

Acidic residues predominate over residues 233 to 244; it reads DFDDSSSEDDPV. Residues 233 to 263 are disordered; the sequence is DFDDSSSEDDPVENSPVVTSPVVSSSKSSFQ. A compositionally biased stretch (low complexity) spans 245-263; that stretch reads ENSPVVTSPVVSSSKSSFQ.

This is Protein YpjB (ypjB) from Escherichia coli (strain K12).